A 365-amino-acid polypeptide reads, in one-letter code: Histidinol-phosphate aminotransferase 2 (365 aa).

Position 222 is an N6-(pyridoxal phosphate)lysine (Lys222).

This sequence belongs to the class-II pyridoxal-phosphate-dependent aminotransferase family. Histidinol-phosphate aminotransferase subfamily. Homodimer. Pyridoxal 5'-phosphate serves as cofactor.

It catalyses the reaction L-histidinol phosphate + 2-oxoglutarate = 3-(imidazol-4-yl)-2-oxopropyl phosphate + L-glutamate. It functions in the pathway amino-acid biosynthesis; L-histidine biosynthesis; L-histidine from 5-phospho-alpha-D-ribose 1-diphosphate: step 7/9. This is Histidinol-phosphate aminotransferase 2 (hisC2) from Bordetella bronchiseptica (strain ATCC BAA-588 / NCTC 13252 / RB50) (Alcaligenes bronchisepticus).